A 342-amino-acid polypeptide reads, in one-letter code: Delta-aminolevulinic acid dehydratase (342 aa).

Zn(2+) is bound by residues cysteine 133, cysteine 135, and cysteine 143. The active-site Schiff-base intermediate with substrate is the lysine 210. Residues arginine 220 and arginine 232 each contribute to the 5-aminolevulinate site. Position 254 is a phosphoserine (serine 254). The Schiff-base intermediate with substrate role is filled by lysine 263. Residues serine 290 and tyrosine 329 each contribute to the 5-aminolevulinate site.

This sequence belongs to the ALAD family. As to quaternary structure, homooctamer. The cofactor is Zn(2+).

It catalyses the reaction 2 5-aminolevulinate = porphobilinogen + 2 H2O + H(+). Its pathway is porphyrin-containing compound metabolism; protoporphyrin-IX biosynthesis; coproporphyrinogen-III from 5-aminolevulinate: step 1/4. Its activity is regulated as follows. Inhibited by divalent lead ions. In terms of biological role, catalyzes an early step in the biosynthesis of tetrapyrroles. Binds two molecules of 5-aminolevulinate per subunit, each at a distinct site, and catalyzes their condensation to form porphobilinogen. The sequence is that of Delta-aminolevulinic acid dehydratase (HEM2) from Saccharomyces cerevisiae (strain ATCC 204508 / S288c) (Baker's yeast).